We begin with the raw amino-acid sequence, 974 residues long: Receptor-like protein 7 (974 aa).

An N-terminal signal peptide occupies residues 1–24 (MSFLIRSICFLILIPSFLITFVSA). At 25–930 (TQHLCHSDQK…EEEEEESFSW (906 aa)) the chain is on the extracellular side. Residues Asn-54 and Asn-90 are each glycosylated (N-linked (GlcNAc...) asparagine). LRR repeat units follow at residues 96-120 (LRHLRDLNLANNNFNNSPIPAEFDK), 122-145 (TGLERLDLSQSSLSGQIPINLLQL), 147-166 (KLVSLDLSSSDFFGDESFHY), 181-204 (LRNLRELDMSYVKISSEIPEEFSN), 206-229 (RSLRSLNLNGCNLFGEFPSSILLI), and 230-252 (PNLQSIDLGNNPNLRGNLPVFHE). Asn-253 carries N-linked (GlcNAc...) asparagine glycosylation. LRR repeat units lie at residues 254-277 (NSLLKLTILYTSFSGAIPDSISSL), 278-301 (KNLTSLTLSVSYFSGKIPFSLGNL), 302-325 (SHLSHLSLSSNNLIGEIPSSIGNL), 327-349 (QLTNFYVGGNKLSGNLPATLSNL), and 350-373 (TKLNTISLSSNQFTGSLPPSISQL). N-linked (GlcNAc...) asparagine glycans are attached at residues Asn-279 and Asn-300. N-linked (GlcNAc...) asparagine glycosylation is present at Asn-348. An LRR 12; degenerate repeat occupies 374-396 (SKLKFFFADDNPFIGAILSPLLK). LRR repeat units lie at residues 397 to 422 (IPSLTRIHLSYNQLNDLVGIENIFML), 425 to 448 (LETFYIYHYNYTKVRPLDLNVFSS), 454 to 472 (TLYISRIPISTTNITSDFP), 473 to 495 (SNLEYLSLRSCNITDFPEFIRKG), 496 to 519 (RNLQILDLSNNKIKGQVPDWLWRM), 521 to 542 (TLNSVDLSNNSLSGFHVSVKAS), 544 to 570 (ESQLTSVDLSSNAFQGPLFLPSKSLRY), 572 to 589 (SGSNNNFTGKIPRSICGL), 590 to 616 (SSLEILDLSNNNLNGSLPWCLETLMSS), 618 to 638 (SDLDLRNNSLSGSLPEIFMNA), 639 to 662 (TKLRSLDVSHNRMEGKLPGSLTGC), 664 to 685 (SLEVLNVGSNRINDMFPFELNS), 687 to 712 (QKLQVLVLHSNKFHGTLHNVDGVWFG), 713 to 737 (FPQLQIIDVSHNDFFGILPSDYFMN), 785 to 809 (LTIYTAIDLSGNQLHGKIPDSIGLL), 810 to 833 (KELRILNMSSNGFTGHIPSSLANL), 834 to 857 (KNLESLDISQNNISGEIPPELGTL), and 859 to 882 (SLAWINVSHNQLVGSIPQGTQFQR). Residues Asn-434, Asn-466, and Asn-484 are each glycosylated (N-linked (GlcNAc...) asparagine). Asn-529 is a glycosylation site (N-linked (GlcNAc...) asparagine). Residues Asn-577, Asn-603, Asn-624, and Asn-637 are each glycosylated (N-linked (GlcNAc...) asparagine). Asn-737 carries an N-linked (GlcNAc...) asparagine glycan. N-linked (GlcNAc...) asparagine glycans are attached at residues Asn-816, Asn-845, and Asn-864. The interval 899–923 (LENVCGHIKESTPTQTEPLETKEEE) is disordered. The helical transmembrane segment at 931-951 (IAAGLGFAPGVVFGLAMGYIV) threads the bilayer. The Cytoplasmic segment spans residues 952–974 (VSYKHQWFMKTFGRSKQQNTRTR).

It belongs to the RLP family.

It is found in the cell membrane. In Arabidopsis thaliana (Mouse-ear cress), this protein is Receptor-like protein 7.